The sequence spans 341 residues: Long-chain acyl-[acyl-carrier-protein] reductase (341 aa).

It belongs to the short-chain dehydrogenases/reductases (SDR) family. A divalent metal cation is required as a cofactor.

It catalyses the reaction a long-chain fatty aldehyde + holo-[ACP] + NADP(+) = a long-chain fatty acyl-[ACP] + NADPH + H(+). The enzyme catalyses a long-chain fatty aldehyde + holo-[ACP] + NAD(+) = a long-chain fatty acyl-[ACP] + NADH + H(+). Catalyzes the NADP-dependent reduction of long-chain acyl-ACP to the corresponding fatty aldehyde. Involved in the biosynthesis of alkanes, mainly heptadecane and pentadecane, by producing the fatty aldehydes used by aldehyde decarbonylase. The protein is Long-chain acyl-[acyl-carrier-protein] reductase of Synechococcus elongatus (strain ATCC 33912 / PCC 7942 / FACHB-805) (Anacystis nidulans R2).